A 318-amino-acid chain; its full sequence is Type II methyltransferase M.HaeII (318 aa).

The 301-residue stretch at 4 to 304 folds into the SAM-dependent MTase C5-type domain; the sequence is YKTIDLFAGI…GSMINSLNMA (301 aa). Residue Cys-73 is part of the active site.

It belongs to the class I-like SAM-binding methyltransferase superfamily. C5-methyltransferase family.

The enzyme catalyses a 2'-deoxycytidine in DNA + S-adenosyl-L-methionine = a 5-methyl-2'-deoxycytidine in DNA + S-adenosyl-L-homocysteine + H(+). A methylase, recognizes the double-stranded sequence 5'-RGCGCY-3', methylates C-? on both strands, and protects the DNA from cleavage by the HaeII endonuclease. The polypeptide is Type II methyltransferase M.HaeII (haeIIM) (Haemophilus aegyptius).